The following is a 762-amino-acid chain: 1-phosphatidylinositol 4,5-bisphosphate phosphodiesterase delta-4 (762 aa).

Positions 16 to 124 (LLMQEGMPMR…WMRGLQLLVD (109 aa)) constitute a PH domain. The interval 26–53 (KVRSKSWKKLRYFRLQNDGMTVWHARQA) is substrate binding. 3 EF-hand domains span residues 134–169 (RLDQ…MNVE), 170–205 (MDQE…LTKR), and 206–237 (AEVQ…EQKE). Residues Asp-147, Asn-149, Asp-151, Lys-153, Glu-158, Asp-183, Ser-185, Ser-187, Thr-189, and Glu-194 each coordinate Ca(2+). The GBA signature appears at 213-243 (ESFSADGQKLTLLEFLDFLREEQKERDCTSE). The region spanning 290-435 (QDMTQPLNHY…LRRRILVKGK (146 aa)) is the PI-PLC X-box domain. The active site involves His-305. 3 residues coordinate Ca(2+): Asn-306, Glu-335, and Asp-337. His-350 is an active-site residue. Glu-384 contacts Ca(2+). Substrate contacts are provided by Lys-433 and Lys-435. The segment covering 443–471 (LEYEEEEAEPELEESELALESQFETEPEP) has biased composition (acidic residues). Residues 443–483 (LEYEEEEAEPELEESELALESQFETEPEPQEQNLQSKDKKK) form a disordered region. Position 457 is a phosphoserine (Ser-457). Positions 493–609 (LSSLVIYLKS…GYVLKPDFLR (117 aa)) constitute a PI-PLC Y-box domain. Ser-522 and Arg-549 together coordinate substrate. In terms of domain architecture, C2 spans 609 to 736 (RDIQSSFHPE…QGYRHIHLLS (128 aa)). Residues Ile-650, Asp-652, Asn-676, Asp-705, Tyr-706, and Asp-707 each contribute to the Ca(2+) site. A PDZ-binding motif is present at residues 731–734 (HIHL).

In terms of assembly, interacts with GRIP1. Interacts (via GBA motif) with guanine nucleotide-binding protein G(i) alpha subunit GNAI3 (inactive GDP-bound form); low-affinity interaction. It depends on Ca(2+) as a cofactor.

The protein localises to the membrane. Its subcellular location is the nucleus. It localises to the cytoplasm. The protein resides in the endoplasmic reticulum. The enzyme catalyses a 1,2-diacyl-sn-glycero-3-phospho-(1D-myo-inositol-4,5-bisphosphate) + H2O = 1D-myo-inositol 1,4,5-trisphosphate + a 1,2-diacyl-sn-glycerol + H(+). The catalysed reaction is a 1,2-diacyl-sn-glycero-3-phospho-(1D-myo-inositol) + H2O = 1D-myo-inositol 1-phosphate + a 1,2-diacyl-sn-glycerol + H(+). Hydrolyzes the phosphatidylinositol 4,5-bisphosphate (PIP2) to generate 2 second messenger molecules diacylglycerol (DAG) and inositol 1,4,5-trisphosphate (IP3). DAG mediates the activation of protein kinase C (PKC), while IP3 releases Ca(2+) from intracellular stores. Required for acrosome reaction in sperm during fertilization, probably by acting as an important enzyme for intracellular Ca(2+) mobilization in the zona pellucida-induced acrosome reaction. May play a role in cell growth. Modulates the liver regeneration in cooperation with nuclear PKC. Overexpression up-regulates the Erk signaling pathway and proliferation. This is 1-phosphatidylinositol 4,5-bisphosphate phosphodiesterase delta-4 (PLCD4) from Pongo abelii (Sumatran orangutan).